The sequence spans 96 residues: Co-chaperonin GroES (96 aa).

It belongs to the GroES chaperonin family. As to quaternary structure, heptamer of 7 subunits arranged in a ring. Interacts with the chaperonin GroEL.

The protein resides in the cytoplasm. Together with the chaperonin GroEL, plays an essential role in assisting protein folding. The GroEL-GroES system forms a nano-cage that allows encapsulation of the non-native substrate proteins and provides a physical environment optimized to promote and accelerate protein folding. GroES binds to the apical surface of the GroEL ring, thereby capping the opening of the GroEL channel. The polypeptide is Co-chaperonin GroES (Thioalkalivibrio sulfidiphilus (strain HL-EbGR7)).